A 567-amino-acid chain; its full sequence is Urease subunit alpha (567 aa).

One can recognise a Urease domain in the interval 129 to 567 (GGIDSHIHFI…LPLAQRYFLF (439 aa)). Ni(2+)-binding residues include His134, His136, and Lys217. At Lys217 the chain carries N6-carboxylysine. Substrate is bound at residue His219. 2 residues coordinate Ni(2+): His246 and His272. His320 (proton donor) is an active-site residue. Position 360 (Asp360) interacts with Ni(2+).

This sequence belongs to the metallo-dependent hydrolases superfamily. Urease alpha subunit family. Heterotrimer of UreA (gamma), UreB (beta) and UreC (alpha) subunits. Three heterotrimers associate to form the active enzyme. Requires Ni cation as cofactor. Post-translationally, carboxylation allows a single lysine to coordinate two nickel ions.

The protein localises to the cytoplasm. The enzyme catalyses urea + 2 H2O + H(+) = hydrogencarbonate + 2 NH4(+). The protein operates within nitrogen metabolism; urea degradation; CO(2) and NH(3) from urea (urease route): step 1/1. The polypeptide is Urease subunit alpha (Pseudomonas putida (strain W619)).